The sequence spans 541 residues: Propionyl-CoA carboxylase beta chain, mitochondrial (541 aa).

The transit peptide at 1–28 (MAAVIRIRAMAAGTRLRVLNCGLGTTIR) directs the protein to the mitochondrion. One can recognise a CoA carboxyltransferase N-terminal domain in the interval 34 to 292 (PVSVNERIEN…SNQDPASIRE (259 aa)). Positions 34-535 (PVSVNERIEN…SKKVHRPWRK (502 aa)) are carboxyltransferase. Residue Ser-73 is modified to Phosphoserine. An N6-acetyllysine; alternate modification is found at Lys-101. The residue at position 101 (Lys-101) is an N6-succinyllysine; alternate. Lys-250 carries the N6-succinyllysine modification. A CoA carboxyltransferase C-terminal domain is found at 296–535 (PSDRLVPELD…SKKVHRPWRK (240 aa)). Residues 327–360 (DEREFFEIMPNYAKNIVIGFARMNGRTVGIVGNQ) form an acyl-CoA binding region. 2 positions are modified to N6-acetyllysine; alternate: Lys-476 and Lys-491. 2 positions are modified to N6-succinyllysine; alternate: Lys-476 and Lys-491.

It belongs to the AccD/PCCB family. In terms of assembly, the holoenzyme is a dodecamer composed of 6 PCCA/alpha subunits and 6 PCCB/beta subunits.

The protein resides in the mitochondrion matrix. It catalyses the reaction propanoyl-CoA + hydrogencarbonate + ATP = (S)-methylmalonyl-CoA + ADP + phosphate + H(+). It carries out the reaction butanoyl-CoA + hydrogencarbonate + ATP = (2S)-ethylmalonyl-CoA + ADP + phosphate + H(+). The protein operates within metabolic intermediate metabolism; propanoyl-CoA degradation; succinyl-CoA from propanoyl-CoA: step 1/3. In terms of biological role, this is one of the 2 subunits of the biotin-dependent propionyl-CoA carboxylase (PCC), a mitochondrial enzyme involved in the catabolism of odd chain fatty acids, branched-chain amino acids isoleucine, threonine, methionine, and valine and other metabolites. Propionyl-CoA carboxylase catalyzes the carboxylation of propionyl-CoA/propanoyl-CoA to D-methylmalonyl-CoA/(S)-methylmalonyl-CoA. Within the holoenzyme, the alpha subunit catalyzes the ATP-dependent carboxylation of the biotin carried by the biotin carboxyl carrier (BCC) domain, while the beta subunit then transfers the carboxyl group from carboxylated biotin to propionyl-CoA. Propionyl-CoA carboxylase also significantly acts on butyryl-CoA/butanoyl-CoA, which is converted to ethylmalonyl-CoA/(2S)-ethylmalonyl-CoA. Other alternative minor substrates include (2E)-butenoyl-CoA/crotonoyl-CoA. The chain is Propionyl-CoA carboxylase beta chain, mitochondrial from Rattus norvegicus (Rat).